The following is a 417-amino-acid chain: MLSRSIGKAAGGLVLGLSVAAAAHAAPLFEPVTVISRASANSEPALGKLLATPSTATVQEVRVDAAATAQPQLEFELLGKRVQAVRSKVEALPDGGSIWYGQFRSPSDRLTAATSSGQDDPGNSLILVRSGDTITGSIRKDGKLYRLRPLGNRHVLVEVDESRMPADHPADYNQLPKIPMADNDHIGIAQASSGTPATIRVLVVATNAAVTAYGGNMQSLVQLAVAESNQGYVNSNVGLTLQLAGYETTNYSESGNFTTDLSRFRGTSDGYMDSIHTSRNTTAADVGVLLINNSAYCGLASGIGSTASTAFAAVYWDCATGYYSFAHEIGHLQSARHDIATDSSTSPYAYGHGYRYEPATGTGWRTIMAYNCTRSCPRLNYWSNPNISYNGIPMGNASTADNQRVLVNTKATIAAFR.

Residues 1–25 form the signal peptide; that stretch reads MLSRSIGKAAGGLVLGLSVAAAAHA. Zn(2+) is bound at residue H327. Residue E328 is part of the active site. Residues H331 and H337 each contribute to the Zn(2+) site.

It belongs to the peptidase M72 family. Zn(2+) is required as a cofactor.

The catalysed reaction is Cleavage of Xaa-|-Asp, Xaa-|-Glu and Xaa-|-cysteic acid bonds.. Metalloprotease, specifically cleaves on the N-terminal side of aspartyl, glutamyl and cysteic acid residues. This chain is Peptidyl-Asp metalloendopeptidase, found in Stenotrophomonas maltophilia (strain K279a).